The following is a 256-amino-acid chain: Hydroxyethylthiazole kinase (256 aa).

Met-38 serves as a coordination point for substrate. ATP contacts are provided by Thr-114 and Thr-159. Substrate is bound at residue Gly-186.

It belongs to the Thz kinase family. The cofactor is Mg(2+).

The catalysed reaction is 5-(2-hydroxyethyl)-4-methylthiazole + ATP = 4-methyl-5-(2-phosphooxyethyl)-thiazole + ADP + H(+). Its pathway is cofactor biosynthesis; thiamine diphosphate biosynthesis; 4-methyl-5-(2-phosphoethyl)-thiazole from 5-(2-hydroxyethyl)-4-methylthiazole: step 1/1. In terms of biological role, catalyzes the phosphorylation of the hydroxyl group of 4-methyl-5-beta-hydroxyethylthiazole (THZ). The polypeptide is Hydroxyethylthiazole kinase (Streptococcus agalactiae serotype V (strain ATCC BAA-611 / 2603 V/R)).